Here is a 269-residue protein sequence, read N- to C-terminus: 4-hydroxy-tetrahydrodipicolinate reductase (269 aa).

Residues 8-13 (GVAGRM), 98-100 (GTT), and 122-125 (APNM) each bind NAD(+). Catalysis depends on H156, which acts as the Proton donor/acceptor. H157 lines the (S)-2,3,4,5-tetrahydrodipicolinate pocket. The active-site Proton donor is K160. 166-167 (GT) provides a ligand contact to (S)-2,3,4,5-tetrahydrodipicolinate.

Belongs to the DapB family.

Its subcellular location is the cytoplasm. The catalysed reaction is (S)-2,3,4,5-tetrahydrodipicolinate + NAD(+) + H2O = (2S,4S)-4-hydroxy-2,3,4,5-tetrahydrodipicolinate + NADH + H(+). The enzyme catalyses (S)-2,3,4,5-tetrahydrodipicolinate + NADP(+) + H2O = (2S,4S)-4-hydroxy-2,3,4,5-tetrahydrodipicolinate + NADPH + H(+). It functions in the pathway amino-acid biosynthesis; L-lysine biosynthesis via DAP pathway; (S)-tetrahydrodipicolinate from L-aspartate: step 4/4. Its function is as follows. Catalyzes the conversion of 4-hydroxy-tetrahydrodipicolinate (HTPA) to tetrahydrodipicolinate. This is 4-hydroxy-tetrahydrodipicolinate reductase from Chromohalobacter salexigens (strain ATCC BAA-138 / DSM 3043 / CIP 106854 / NCIMB 13768 / 1H11).